The primary structure comprises 525 residues: CTP synthase (525 aa).

The amidoligase domain stretch occupies residues 1–269 (MKYIIVTGGV…ADAITTHLHL (269 aa)). Residue S12 participates in CTP binding. A UTP-binding site is contributed by S12. Residues 13–18 (GLGKGI) and D70 contribute to the ATP site. 2 residues coordinate Mg(2+): D70 and E144. CTP contacts are provided by residues 151-153 (DIE), 190-195 (KTKPTQ), and K226. Residues 190–195 (KTKPTQ) and K226 contribute to the UTP site. The region spanning 292 to 524 (VAIVSKYGIE…VSACRKNKKT (233 aa)) is the Glutamine amidotransferase type-1 domain. G348 provides a ligand contact to L-glutamine. C375 acts as the Nucleophile; for glutamine hydrolysis in catalysis. Residues 376-379 (LGFQ), E399, and R454 contribute to the L-glutamine site. Residues H497 and E499 contribute to the active site.

Belongs to the CTP synthase family. In terms of assembly, homotetramer.

It catalyses the reaction UTP + L-glutamine + ATP + H2O = CTP + L-glutamate + ADP + phosphate + 2 H(+). It carries out the reaction L-glutamine + H2O = L-glutamate + NH4(+). The catalysed reaction is UTP + NH4(+) + ATP = CTP + ADP + phosphate + 2 H(+). The protein operates within pyrimidine metabolism; CTP biosynthesis via de novo pathway; CTP from UDP: step 2/2. Allosterically activated by GTP, when glutamine is the substrate; GTP has no effect on the reaction when ammonia is the substrate. The allosteric effector GTP functions by stabilizing the protein conformation that binds the tetrahedral intermediate(s) formed during glutamine hydrolysis. Inhibited by the product CTP, via allosteric rather than competitive inhibition. Its function is as follows. Catalyzes the ATP-dependent amination of UTP to CTP with either L-glutamine or ammonia as the source of nitrogen. Regulates intracellular CTP levels through interactions with the four ribonucleotide triphosphates. In Methanosphaerula palustris (strain ATCC BAA-1556 / DSM 19958 / E1-9c), this protein is CTP synthase.